The primary structure comprises 301 residues: GTPase Era (301 aa).

Residues 6–173 (KSGFVAIVGR…LEQTNANLEI (168 aa)) enclose the Era-type G domain. The G1 stretch occupies residues 14-21 (GRPNVGKS). 14-21 (GRPNVGKS) provides a ligand contact to GTP. Residues 40–44 (QTTRN) are G2. Residues 61 to 64 (DTPG) form a G3 region. GTP contacts are provided by residues 61 to 65 (DTPGI) and 123 to 126 (NKID). The G4 stretch occupies residues 123–126 (NKID). The segment at 152 to 154 (ISA) is G5. In terms of domain architecture, KH type-2 spans 204–282 (TREEVPHSVA…FLEIWVKVQK (79 aa)).

Belongs to the TRAFAC class TrmE-Era-EngA-EngB-Septin-like GTPase superfamily. Era GTPase family. As to quaternary structure, monomer.

Its subcellular location is the cytoplasm. The protein localises to the cell membrane. Its function is as follows. An essential GTPase that binds both GDP and GTP, with rapid nucleotide exchange. Plays a role in 16S rRNA processing and 30S ribosomal subunit biogenesis and possibly also in cell cycle regulation and energy metabolism. The polypeptide is GTPase Era (Listeria innocua serovar 6a (strain ATCC BAA-680 / CLIP 11262)).